The primary structure comprises 240 residues: Ribonuclease PH (240 aa).

Residues Arg87 and 125-127 contribute to the phosphate site; that span reads GTR.

The protein belongs to the RNase PH family. As to quaternary structure, homohexameric ring arranged as a trimer of dimers.

It catalyses the reaction tRNA(n+1) + phosphate = tRNA(n) + a ribonucleoside 5'-diphosphate. In terms of biological role, phosphorolytic 3'-5' exoribonuclease that plays an important role in tRNA 3'-end maturation. Removes nucleotide residues following the 3'-CCA terminus of tRNAs; can also add nucleotides to the ends of RNA molecules by using nucleoside diphosphates as substrates, but this may not be physiologically important. Probably plays a role in initiation of 16S rRNA degradation (leading to ribosome degradation) during starvation. The polypeptide is Ribonuclease PH (Crocosphaera subtropica (strain ATCC 51142 / BH68) (Cyanothece sp. (strain ATCC 51142))).